The primary structure comprises 582 residues: External alternative NADH-ubiquinone oxidoreductase, mitochondrial (582 aa).

The N-terminal 30 residues, 1–30, are a transit peptide targeting the mitochondrion; that stretch reads MLRLRPAVRAVSVARSVALTRSLHVSVAKF. Residues 46-65 are disordered; it reads KQTAGHQGHHQEIPKPDENH. The segment covering 54–65 has biased composition (basic and acidic residues); it reads HHQEIPKPDENH. 114–144 provides a ligand contact to FAD; the sequence is TLVVLGSGWGSVSFLKKLDTSNYNVIVVSPR. Residue 277–313 coordinates NAD(+); that stretch reads LHTVVVGGGPTGVEFAAELQDFFEDDLRKWIPDIRDD. Positions 454–501 form a coiled coil; that stretch reads LLNGIAKTEDLNNEITNLEKQSEHTFDEQERKNIFAQLESKSRKLRRS.

The protein belongs to the NADH dehydrogenase family. The cofactor is FAD.

The protein resides in the mitochondrion inner membrane. It carries out the reaction a quinone + NADH + H(+) = a quinol + NAD(+). The enzyme catalyses a ubiquinone + NADH + H(+) = a ubiquinol + NAD(+). Its function is as follows. Alternative NADH-ubiquinone oxidoreductase which catalyzes the oxidation of mitochondrial NADH does not translocate protons across the inner mitochondrial membrane. The sequence is that of External alternative NADH-ubiquinone oxidoreductase, mitochondrial (NDH2) from Yarrowia lipolytica (strain CLIB 122 / E 150) (Yeast).